Consider the following 148-residue polypeptide: Large ribosomal subunit protein bL9 (148 aa).

Belongs to the bacterial ribosomal protein bL9 family.

Its function is as follows. Binds to the 23S rRNA. This Geobacter sulfurreducens (strain ATCC 51573 / DSM 12127 / PCA) protein is Large ribosomal subunit protein bL9.